We begin with the raw amino-acid sequence, 436 residues long: 3-ketoacyl-CoA thiolase (436 aa).

The Acyl-thioester intermediate role is filled by C99. Residues H392 and C422 each act as proton acceptor in the active site.

Belongs to the thiolase-like superfamily. Thiolase family. Heterotetramer of two alpha chains (FadJ) and two beta chains (FadI).

It localises to the cytoplasm. It catalyses the reaction an acyl-CoA + acetyl-CoA = a 3-oxoacyl-CoA + CoA. The protein operates within lipid metabolism; fatty acid beta-oxidation. Functionally, catalyzes the final step of fatty acid oxidation in which acetyl-CoA is released and the CoA ester of a fatty acid two carbons shorter is formed. The polypeptide is 3-ketoacyl-CoA thiolase (Photorhabdus laumondii subsp. laumondii (strain DSM 15139 / CIP 105565 / TT01) (Photorhabdus luminescens subsp. laumondii)).